A 146-amino-acid polypeptide reads, in one-letter code: uncharacterized protein (146 aa).

The HTH marR-type domain occupies 1 to 137 (MLSQEFFNSF…TINVMNQIHE (137 aa)).

This is an uncharacterized protein from Staphylococcus aureus (strain N315).